The sequence spans 323 residues: MAAAALPAWLSLQSRARTLRAFSTAVYSATPVPTPSLPERTPGNERPPRRKALPPRTEKMAVDQDWPSVYPVAAPFKPSAVPLPVRMGYPVKKGVPMAKEGNLELLKIPNFLHLTPVAIKKHCEALKDFCTEWPAALDSDEKCEKHFPIEIDSTDYVSSGPSVRNPRARVVVLRVKLSSLNLDDHAKKKLIKLVGERYCKTTDVLTIKTDRCPLRRQNYDYAVYLLTVLYHESWNTEEWEKSKTEADMEEYIWENSSSERNILETLLQMKAAEKNMEINKEELLGTKEIEEYKKSVVSLKNEEENENSISQYKESVKRLLNVT.

Residues 31–59 (PVPTPSLPERTPGNERPPRRKALPPRTEK) are disordered. A coiled-coil region spans residues 257–321 (SSERNILETL…YKESVKRLLN (65 aa)).

The protein belongs to the mitochondrion-specific ribosomal protein mS35 family. Component of the mitochondrial small ribosomal subunit (mt-SSU). Mature mammalian 55S mitochondrial ribosomes consist of a small (28S) and a large (39S) subunit. The 28S small subunit contains a 12S ribosomal RNA (12S mt-rRNA) and 30 different proteins. The 39S large subunit contains a 16S rRNA (16S mt-rRNA), a copy of mitochondrial valine transfer RNA (mt-tRNA(Val)), which plays an integral structural role, and 52 different proteins.

It is found in the mitochondrion. The protein is Small ribosomal subunit protein mS35 of Homo sapiens (Human).